The primary structure comprises 392 residues: Na(+)/H(+) antiporter NhaA (392 aa).

The next 11 helical transmembrane spans lie at 14–34 (AGGL…NSPL), 59–79 (LLLW…GLEV), 95–115 (IFPA…YLLF), 125–145 (GWAI…ALLG), 154–174 (VFLL…IALF), 179–199 (VSLQ…YMNW), 213–233 (LVLW…GVIV), 254–274 (GLHP…NAGV), 287–307 (LLPL…IFLF), 328–348 (IFAV…IASL), and 363–383 (LGIL…LRLA).

The protein belongs to the NhaA Na(+)/H(+) (TC 2.A.33) antiporter family.

It is found in the cell inner membrane. The enzyme catalyses Na(+)(in) + 2 H(+)(out) = Na(+)(out) + 2 H(+)(in). Functionally, na(+)/H(+) antiporter that extrudes sodium in exchange for external protons. The protein is Na(+)/H(+) antiporter NhaA of Yersinia enterocolitica serotype O:8 / biotype 1B (strain NCTC 13174 / 8081).